A 425-amino-acid chain; its full sequence is Serine hydroxymethyltransferase (425 aa).

(6S)-5,6,7,8-tetrahydrofolate is bound by residues Leu-124 and 128-130 (GHL). Lys-233 carries the N6-(pyridoxal phosphate)lysine modification.

The protein belongs to the SHMT family. As to quaternary structure, homodimer. Pyridoxal 5'-phosphate serves as cofactor.

It localises to the cytoplasm. It catalyses the reaction (6R)-5,10-methylene-5,6,7,8-tetrahydrofolate + glycine + H2O = (6S)-5,6,7,8-tetrahydrofolate + L-serine. Its pathway is one-carbon metabolism; tetrahydrofolate interconversion. The protein operates within amino-acid biosynthesis; glycine biosynthesis; glycine from L-serine: step 1/1. In terms of biological role, catalyzes the reversible interconversion of serine and glycine with tetrahydrofolate (THF) serving as the one-carbon carrier. This reaction serves as the major source of one-carbon groups required for the biosynthesis of purines, thymidylate, methionine, and other important biomolecules. Also exhibits THF-independent aldolase activity toward beta-hydroxyamino acids, producing glycine and aldehydes, via a retro-aldol mechanism. The protein is Serine hydroxymethyltransferase of Clavibacter sepedonicus (Clavibacter michiganensis subsp. sepedonicus).